Reading from the N-terminus, the 156-residue chain is Small ribosomal subunit protein uS7 (156 aa).

The protein belongs to the universal ribosomal protein uS7 family. As to quaternary structure, part of the 30S ribosomal subunit. Contacts proteins S9 and S11.

Functionally, one of the primary rRNA binding proteins, it binds directly to 16S rRNA where it nucleates assembly of the head domain of the 30S subunit. Is located at the subunit interface close to the decoding center, probably blocks exit of the E-site tRNA. This Buchnera aphidicola subsp. Cinara cedri (strain Cc) protein is Small ribosomal subunit protein uS7.